We begin with the raw amino-acid sequence, 582 residues long: Formate--tetrahydrofolate ligase (582 aa).

65 to 72 is an ATP binding site; sequence TPLGEGKT.

Belongs to the formate--tetrahydrofolate ligase family.

It carries out the reaction (6S)-5,6,7,8-tetrahydrofolate + formate + ATP = (6R)-10-formyltetrahydrofolate + ADP + phosphate. It participates in one-carbon metabolism; tetrahydrofolate interconversion. This chain is Formate--tetrahydrofolate ligase, found in Vibrio cholerae serotype O1 (strain ATCC 39315 / El Tor Inaba N16961).